Consider the following 119-residue polypeptide: NADH-quinone oxidoreductase subunit A (119 aa).

Helical transmembrane passes span 7–27 (YPVLLFLLVGTGLGIALVSIG), 63–83 (LVAILFIIFDLETAFLFPWGV), and 88–108 (IGWPGFSAMMIFLLEFLLGFA).

It belongs to the complex I subunit 3 family. NDH-1 is composed of 14 different subunits. Subunits NuoA, H, J, K, L, M, N constitute the membrane sector of the complex.

The protein localises to the cell inner membrane. The catalysed reaction is a quinone + NADH + 5 H(+)(in) = a quinol + NAD(+) + 4 H(+)(out). In terms of biological role, NDH-1 shuttles electrons from NADH, via FMN and iron-sulfur (Fe-S) centers, to quinones in the respiratory chain. The immediate electron acceptor for the enzyme in this species is believed to be ubiquinone. Couples the redox reaction to proton translocation (for every two electrons transferred, four hydrogen ions are translocated across the cytoplasmic membrane), and thus conserves the redox energy in a proton gradient. This chain is NADH-quinone oxidoreductase subunit A, found in Burkholderia vietnamiensis (strain G4 / LMG 22486) (Burkholderia cepacia (strain R1808)).